Consider the following 418-residue polypeptide: 26S proteasome regulatory subunit 6B (418 aa).

At Met-1 the chain carries N-acetylmethionine. Ser-21 is subject to Phosphoserine. A Phosphothreonine modification is found at Thr-25. Ser-28 carries the post-translational modification Phosphoserine. An ATP-binding site is contributed by 206-213; the sequence is GPPGCGKT. Residues Lys-397 and Lys-401 each carry the N6-acetyllysine modification.

This sequence belongs to the AAA ATPase family. In terms of assembly, component of the 19S proteasome regulatory particle complex. The 26S proteasome consists of a 20S core particle (CP) and two 19S regulatory subunits (RP). The regulatory particle is made of a lid composed of 9 subunits, a base containing 6 ATPases including PSMC4 and few additional components. Interacts with NR1I3. Interacts with PAAF1. Interacts with TRIM5. Interacts with ZFAND1.

It is found in the cytoplasm. Its subcellular location is the nucleus. Its function is as follows. Component of the 26S proteasome, a multiprotein complex involved in the ATP-dependent degradation of ubiquitinated proteins. This complex plays a key role in the maintenance of protein homeostasis by removing misfolded or damaged proteins, which could impair cellular functions, and by removing proteins whose functions are no longer required. Therefore, the proteasome participates in numerous cellular processes, including cell cycle progression, apoptosis, or DNA damage repair. PSMC4 belongs to the heterohexameric ring of AAA (ATPases associated with diverse cellular activities) proteins that unfolds ubiquitinated target proteins that are concurrently translocated into a proteolytic chamber and degraded into peptides. This Bos taurus (Bovine) protein is 26S proteasome regulatory subunit 6B (PSMC4).